The sequence spans 237 residues: Putative glutathione-dependent formaldehyde-activating enzyme (237 aa).

One can recognise a CENP-V/GFA domain in the interval 38–152 (ITLICHCPPS…LGQSGGSEGE (115 aa)). 7 residues coordinate Zn(2+): C42, C44, C67, C69, C72, C114, and C117.

It belongs to the Gfa family. Zn(2+) is required as a cofactor.

The enzyme catalyses S-(hydroxymethyl)glutathione = glutathione + formaldehyde. It participates in one-carbon metabolism; formaldehyde degradation; formate from formaldehyde (glutathione route): step 1/3. Its function is as follows. Catalyzes the condensation of formaldehyde and glutathione to S-hydroxymethylglutathione. The sequence is that of Putative glutathione-dependent formaldehyde-activating enzyme from Sordaria macrospora (strain ATCC MYA-333 / DSM 997 / K(L3346) / K-hell).